Consider the following 1040-residue polypeptide: Multidrug resistance protein MdtB (1040 aa).

12 helical membrane-spanning segments follow: residues 16-36 (FIMR…AGII), 347-367 (LMMA…NIPA), 369-389 (IIPG…MVFL), 396-416 (LTLM…IVVI), 440-460 (IGFT…PLLF), 472-492 (FAIT…TLTP), 537-557 (WLTL…WVFI), 863-883 (LGST…VLGI), 888-908 (FIHP…ALLA), 911-931 (IAGS…IGIV), 968-988 (ILMT…STGV), and 998-1018 (IGMV…TPVI).

This sequence belongs to the resistance-nodulation-cell division (RND) (TC 2.A.6) family. MdtB subfamily. In terms of assembly, part of a tripartite efflux system composed of MdtA, MdtB and MdtC. MdtB forms a heteromultimer with MdtC.

It is found in the cell inner membrane. This is Multidrug resistance protein MdtB from Shigella boydii serotype 18 (strain CDC 3083-94 / BS512).